Reading from the N-terminus, the 75-residue chain is Small ribosomal subunit protein bS18 (75 aa).

The protein belongs to the bacterial ribosomal protein bS18 family. In terms of assembly, part of the 30S ribosomal subunit. Forms a tight heterodimer with protein bS6.

Binds as a heterodimer with protein bS6 to the central domain of the 16S rRNA, where it helps stabilize the platform of the 30S subunit. The polypeptide is Small ribosomal subunit protein bS18 (Saccharophagus degradans (strain 2-40 / ATCC 43961 / DSM 17024)).